Reading from the N-terminus, the 541-residue chain is Membrane protein insertase YidC (541 aa).

Transmembrane regions (helical) follow at residues 7-27 (LLFM…QVDY), 345-365 (LVQN…AILY), 415-435 (LGGC…YWTF), 453-473 (LSAQ…MFLL), and 492-512 (FMPL…VLYW).

This sequence belongs to the OXA1/ALB3/YidC family. Type 1 subfamily. As to quaternary structure, interacts with the Sec translocase complex via SecD. Specifically interacts with transmembrane segments of nascent integral membrane proteins during membrane integration.

It localises to the cell inner membrane. Required for the insertion and/or proper folding and/or complex formation of integral membrane proteins into the membrane. Involved in integration of membrane proteins that insert both dependently and independently of the Sec translocase complex, as well as at least some lipoproteins. Aids folding of multispanning membrane proteins. This is Membrane protein insertase YidC from Histophilus somni (strain 129Pt) (Haemophilus somnus).